The primary structure comprises 397 residues: MATTLTTDLRLSIAHQTRFGLRLASAISSDPESAATNVAFSPVSLHVALSLVAAGARGATRDQLVAVLGGGGAGEAEALQSLAEQVVQFVLADASINSGPRIAFANGVFVDASLSLKPSFQELAVCNYKSEVQSVDFKTKAPEAASQVNSWVKNVTAGLIEEILPAGSIDNTTRLVLGNALYFKGLWTKKFDESKTKYDDFHLLNGSTVQTPFMSSTNKQYLSSSDGLKVLKLPYQHGGDNRQFSMYILLPEAHDGLSRLAQKLSTEPDFLENRIPTEEVEVGQFMLPKFKISFGFEANKLLKTLGLQLPFSLEANLSEMVNSPMGLYISSVFHKTFVEVDEEGTKAGAATGDVIVDRSLPIRMDFVANHPFLFLIREDIAGVVLFIGHVANPAVSS.

Ala-2 carries the post-translational modification N-acetylalanine. The tract at residues 344-368 (GTKAGAATGDVIVDRSLPIRMDFVA) is RCL.

This sequence belongs to the serpin family. In terms of tissue distribution, highly expressed in endosperm, at intermediate level in embryo and at lower levels in roots.

In terms of biological role, inhibits chymotrypsin in vitro. This chain is Serpin-Z7 (PAZ7), found in Hordeum vulgare (Barley).